We begin with the raw amino-acid sequence, 179 residues long: Negative modulator of initiation of replication (179 aa).

Belongs to the SeqA family. In terms of assembly, homodimer. Polymerizes to form helical filaments.

The protein localises to the cytoplasm. Its function is as follows. Negative regulator of replication initiation, which contributes to regulation of DNA replication and ensures that replication initiation occurs exactly once per chromosome per cell cycle. Binds to pairs of hemimethylated GATC sequences in the oriC region, thus preventing assembly of replication proteins and re-initiation at newly replicated origins. Repression is relieved when the region becomes fully methylated. In Vibrio atlanticus (strain LGP32) (Vibrio splendidus (strain Mel32)), this protein is Negative modulator of initiation of replication.